Consider the following 155-residue polypeptide: Egg cell-secreted protein 1.5 (155 aa).

The N-terminal stretch at 1 to 32 (MATKSTSKPLLLSFLMMSYLISTFHVITVAEG) is a signal peptide.

It belongs to the plant egg cell-secreted peptide family. As to expression, restricted to female reproductive tissues, specifically accumulating in storage vesicles of the unfertilized egg cell.

The protein resides in the cytoplasmic vesicle. It is found in the secreted. Its function is as follows. Involved in the regulation of gamete interactions during the double fertilization and to prevent multiple-pollen tube attraction; mediates the redistribution of the gamete fusogen HAP2/GCS1 to the cell surface after secretion upon sperm arrival. The protein is Egg cell-secreted protein 1.5 (EC1.5) of Arabidopsis thaliana (Mouse-ear cress).